Consider the following 415-residue polypeptide: Gamma-glutamyl phosphate reductase (415 aa).

This sequence belongs to the gamma-glutamyl phosphate reductase family.

It is found in the cytoplasm. The catalysed reaction is L-glutamate 5-semialdehyde + phosphate + NADP(+) = L-glutamyl 5-phosphate + NADPH + H(+). Its pathway is amino-acid biosynthesis; L-proline biosynthesis; L-glutamate 5-semialdehyde from L-glutamate: step 2/2. Catalyzes the NADPH-dependent reduction of L-glutamate 5-phosphate into L-glutamate 5-semialdehyde and phosphate. The product spontaneously undergoes cyclization to form 1-pyrroline-5-carboxylate. The polypeptide is Gamma-glutamyl phosphate reductase (Dictyoglomus thermophilum (strain ATCC 35947 / DSM 3960 / H-6-12)).